The sequence spans 401 residues: Protein nanos (401 aa).

The interval 181-207 is disordered; that stretch reads LGRMSYGSAPPQVQMPPQQQHQQQQGL. Low complexity predominate over residues 190 to 205; the sequence is PPQVQMPPQQQHQQQQ. The Nanos-type zinc finger occupies 318–372; it reads HCVFCENNNEPEAVINSHSVRDNFNRVLCPKLRTYVCPICGASGDSAHTIKYCPK. Positions 319, 322, 335, 346, 354, 357, 365, and 370 each coordinate Zn(2+). 2 consecutive short sequence motifs (C2HC) follow at residues 319-346 and 354-370; these read CVFCENNNEPEAVINSHSVRDNFNRVLC and CPICGASGDSAHTIKYC.

The protein belongs to the nanos family. As to quaternary structure, interacts with pum and brat. Interacts with cup. Interacts with mei-P26; possibly involved in regulation of brat levels. Interacts with wh; may be involved in mei-P26-dependent derepression of the BMP signaling pathway. Acts via the formation of a quaternary complex composed of pum, nanos, brat and the 3'-UTR mRNA of hb. Binds RNA with no specificity. Posterior part of the embryo. While the transcript is present throughout the embryo, nanos translation is controlled by smg, and the protein is found in pole plasm and pole cells. In the female ovary expressed in germline stem cells, precystoblasts and in maturing cystoblasts; in early cystoblasts expression is post-transcriptionally repressed by bam in a 3'UTR-dependent manner.

The protein resides in the cytoplasm. The protein localises to the cytoplasmic ribonucleoprotein granule. In terms of biological role, maternal RNA-binding protein that is required for germ cells proliferation and self-renewal. Acts by forming a complex with pum and brat that regulates translation and mRNA stability. The complex binds to the Nanos Response Element (NRE), a 16 bp sequence in the hb mRNA 3'-UTR and prevents its translation. Controls posterior development. Rescuing factor for the abdominal defect of posterior group mutants. The other posterior group genes are not required for nanos function but rather play a role in localization or distribution of nanos protein. This is Protein nanos from Drosophila melanogaster (Fruit fly).